A 371-amino-acid chain; its full sequence is AA9 family lytic polysaccharide monooxygenase B (371 aa).

The first 25 residues, methionine 1 to glycine 25, serve as a signal peptide directing secretion. Positions 20 and 104 each coordinate Cu(2+). Intrachain disulfides connect cysteine 74/cysteine 194 and cysteine 115/cysteine 119. The N-linked (GlcNAc...) asparagine glycan is linked to asparagine 154. The O2 site is built by histidine 180 and glutamine 189. Tyrosine 191 is a binding site for Cu(2+). Residues histidine 304 to serine 332 are disordered. Residues alanine 307–serine 332 show a composition bias toward low complexity.

The protein belongs to the polysaccharide monooxygenase AA9 family. It depends on Cu(2+) as a cofactor.

It is found in the secreted. The enzyme catalyses [(1-&gt;4)-beta-D-glucosyl]n+m + reduced acceptor + O2 = 4-dehydro-beta-D-glucosyl-[(1-&gt;4)-beta-D-glucosyl]n-1 + [(1-&gt;4)-beta-D-glucosyl]m + acceptor + H2O.. Lytic polysaccharide monooxygenase (LPMO) that depolymerizes crystalline and amorphous polysaccharides via the oxidation of scissile alpha- or beta-(1-4)-glycosidic bonds, yielding C1 and C4 oxidation products. Catalysis by LPMOs requires the reduction of the active-site copper from Cu(II) to Cu(I) by a reducing agent and H(2)O(2) or O(2) as a cosubstrate. In addition to cellulose, also cleaves the beta-(1!4)-glucan backbone of tamarind xyloglucan, irrespective of substitutions which contrasts with AA9A xyloglucan cleavage activity. In Aspergillus tamarii, this protein is AA9 family lytic polysaccharide monooxygenase B.